Here is a 141-residue protein sequence, read N- to C-terminus: Hemoglobin subunit alpha (141 aa).

In terms of domain architecture, Globin spans 1 to 141; that stretch reads VLSPADKANI…VSTVLTSKYR (141 aa). S3 is modified (phosphoserine). K7 and K11 each carry N6-succinyllysine. The residue at position 16 (K16) is an N6-acetyllysine; alternate. N6-succinyllysine; alternate is present on K16. Position 24 is a phosphotyrosine (Y24). At S35 the chain carries Phosphoserine. N6-succinyllysine is present on K40. S49 bears the Phosphoserine mark. H58 serves as a coordination point for O2. H87 provides a ligand contact to heme b. Phosphoserine is present on S102. A Phosphothreonine modification is found at T108. Residues S124 and S131 each carry the phosphoserine modification. Residues T134 and T137 each carry the phosphothreonine modification. S138 carries the post-translational modification Phosphoserine.

It belongs to the globin family. Heterotetramer of two alpha chains and two beta chains. As to expression, red blood cells.

Its function is as follows. Involved in oxygen transport from the lung to the various peripheral tissues. Hemopressin acts as an antagonist peptide of the cannabinoid receptor CNR1. Hemopressin-binding efficiently blocks cannabinoid receptor CNR1 and subsequent signaling. The polypeptide is Hemoglobin subunit alpha (HBA) (Meles meles (Eurasian badger)).